The following is a 473-amino-acid chain: Azaphilone pigments biosynthesis cluster protein L (473 aa).

The N-terminal stretch at Met1 to Ser23 is a signal peptide. ANK repeat units lie at residues Glu403–Ala432 and Arg436–Thr465. Asn462 carries an N-linked (GlcNAc...) asparagine glycan.

Its function is as follows. Part of the gene cluster that mediates the biosynthesis of azaphilone pigments (MonAzPs), a complex mixture of compounds with a common azaphilone skeleton very widely used as food colorants. Seems not to play a direct role in the biosynthesis but might have a regulatorx function. The protein is Azaphilone pigments biosynthesis cluster protein L of Monascus ruber (Mold).